The sequence spans 419 residues: Multifunctional CCA protein (419 aa).

ATP-binding residues include Gly-8 and Arg-11. Residues Gly-8 and Arg-11 each coordinate CTP. Asp-21 and Asp-23 together coordinate Mg(2+). Residues Arg-91, Arg-141, and Arg-144 each contribute to the ATP site. CTP contacts are provided by Arg-91, Arg-141, and Arg-144. The region spanning 230–331 (TGVHVMMVLD…VRLLERCDAL (102 aa)) is the HD domain.

This sequence belongs to the tRNA nucleotidyltransferase/poly(A) polymerase family. Bacterial CCA-adding enzyme type 1 subfamily. Monomer. Can also form homodimers and oligomers. The cofactor is Mg(2+). Requires Ni(2+) as cofactor.

The catalysed reaction is a tRNA precursor + 2 CTP + ATP = a tRNA with a 3' CCA end + 3 diphosphate. It carries out the reaction a tRNA with a 3' CCA end + 2 CTP + ATP = a tRNA with a 3' CCACCA end + 3 diphosphate. In terms of biological role, catalyzes the addition and repair of the essential 3'-terminal CCA sequence in tRNAs without using a nucleic acid template. Adds these three nucleotides in the order of C, C, and A to the tRNA nucleotide-73, using CTP and ATP as substrates and producing inorganic pyrophosphate. tRNA 3'-terminal CCA addition is required both for tRNA processing and repair. Also involved in tRNA surveillance by mediating tandem CCA addition to generate a CCACCA at the 3' terminus of unstable tRNAs. While stable tRNAs receive only 3'-terminal CCA, unstable tRNAs are marked with CCACCA and rapidly degraded. The polypeptide is Multifunctional CCA protein (Paracidovorax citrulli (strain AAC00-1) (Acidovorax citrulli)).